We begin with the raw amino-acid sequence, 271 residues long: Catechol O-methyltransferase (271 aa).

Topologically, residues M1–P6 are cytoplasmic. A helical; Signal-anchor for type II membrane protein transmembrane segment spans residues L7–L26. The Extracellular portion of the chain corresponds to R27–P271. Residues V92, E114, S122, E140, I141, G167–Q170, S169, and D191 each bind S-adenosyl-L-methionine. D191 lines the Mg(2+) pocket. Residue K194 participates in substrate binding. Mg(2+)-binding residues include D219 and N220. Substrate is bound by residues N220 and E249. S267 is modified (phosphoserine).

This sequence belongs to the class I-like SAM-binding methyltransferase superfamily. Cation-dependent O-methyltransferase family. Requires Mg(2+) as cofactor. Post-translationally, the N-terminus is blocked. In terms of tissue distribution, brain, liver, placenta, lymphocytes and erythrocytes.

It localises to the cytoplasm. It is found in the cell membrane. The catalysed reaction is a catechol + S-adenosyl-L-methionine = a guaiacol + S-adenosyl-L-homocysteine + H(+). The enzyme catalyses 2-hydroxyestrone + S-adenosyl-L-methionine = 2-hydroxy-3-methoxy-estrone + S-adenosyl-L-homocysteine + H(+). It carries out the reaction 4-hydroxyestrone + S-adenosyl-L-methionine = 4-methoxyestrone + S-adenosyl-L-homocysteine + H(+). It catalyses the reaction 2-hydroxyestrone + S-adenosyl-L-methionine = 2-methoxyestrone + S-adenosyl-L-homocysteine + H(+). The catalysed reaction is 4-hydroxy-17beta-estradiol + S-adenosyl-L-methionine = 4-methoxy-17beta-estradiol + S-adenosyl-L-homocysteine + H(+). The enzyme catalyses 2-hydroxy-17beta-estradiol + S-adenosyl-L-methionine = 2-hydroxy-3-methoxy-17beta-estradiol + S-adenosyl-L-homocysteine + H(+). It carries out the reaction 2-hydroxy-17beta-estradiol + S-adenosyl-L-methionine = 2-methoxy-17beta-estradiol + S-adenosyl-L-homocysteine + H(+). Functionally, catalyzes the O-methylation, and thereby the inactivation, of catecholamine neurotransmitters and catechol hormones. Also shortens the biological half-lives of certain neuroactive drugs, like L-DOPA, alpha-methyl DOPA and isoproterenol. In Homo sapiens (Human), this protein is Catechol O-methyltransferase.